The chain runs to 1051 residues: Carbamoyl phosphate synthase large chain (1051 aa).

The interval 1–399 (MKETPKKVLV…SLQKAVRMLD (399 aa)) is carboxyphosphate synthetic domain. Residues Arg127, Arg167, Gly173, Gly174, Lys206, Leu208, Glu213, Gly239, Val240, His241, Gln282, and Glu296 each coordinate ATP. Residues 131–325 (RETMIENNLP…LAYVSAKLAL (195 aa)) enclose the ATP-grasp 1 domain. Residues Gln282, Glu296, and Asn298 each contribute to the Mg(2+) site. Mn(2+)-binding residues include Gln282, Glu296, and Asn298. The tract at residues 400-548 (IGEPGVVGGK…LTYNGTEDDL (149 aa)) is oligomerization domain. The interval 549-930 (EFSQGNKLLM…LKSWLSSIPN (382 aa)) is carbamoyl phosphate synthetic domain. An ATP-grasp 2 domain is found at 673-863 (SKLLDKLGIS…LINESMKAIF (191 aa)). Residues Arg709, Lys748, Ile750, Glu755, Gly779, Val780, His781, Ser782, Gln822, and Glu834 each contribute to the ATP site. Mg(2+) contacts are provided by Gln822, Glu834, and Asn836. 3 residues coordinate Mn(2+): Gln822, Glu834, and Asn836. The MGS-like domain occupies 930–1051 (NRIPNKNGIA…FEISEYGGGI (122 aa)). Positions 931–1051 (RIPNKNGIAL…FEISEYGGGI (121 aa)) are allosteric domain.

The protein belongs to the CarB family. In terms of assembly, composed of two chains; the small (or glutamine) chain promotes the hydrolysis of glutamine to ammonia, which is used by the large (or ammonia) chain to synthesize carbamoyl phosphate. Tetramer of heterodimers (alpha,beta)4. The cofactor is Mg(2+). Mn(2+) is required as a cofactor.

The enzyme catalyses hydrogencarbonate + L-glutamine + 2 ATP + H2O = carbamoyl phosphate + L-glutamate + 2 ADP + phosphate + 2 H(+). It catalyses the reaction hydrogencarbonate + NH4(+) + 2 ATP = carbamoyl phosphate + 2 ADP + phosphate + 2 H(+). The protein operates within amino-acid biosynthesis; L-arginine biosynthesis; carbamoyl phosphate from bicarbonate: step 1/1. It participates in pyrimidine metabolism; UMP biosynthesis via de novo pathway; (S)-dihydroorotate from bicarbonate: step 1/3. Functionally, large subunit of the glutamine-dependent carbamoyl phosphate synthetase (CPSase). CPSase catalyzes the formation of carbamoyl phosphate from the ammonia moiety of glutamine, carbonate, and phosphate donated by ATP, constituting the first step of 2 biosynthetic pathways, one leading to arginine and/or urea and the other to pyrimidine nucleotides. The large subunit (synthetase) binds the substrates ammonia (free or transferred from glutamine from the small subunit), hydrogencarbonate and ATP and carries out an ATP-coupled ligase reaction, activating hydrogencarbonate by forming carboxy phosphate which reacts with ammonia to form carbamoyl phosphate. The chain is Carbamoyl phosphate synthase large chain from Saccharolobus islandicus (strain M.16.4 / Kamchatka #3) (Sulfolobus islandicus).